The following is a 573-amino-acid chain: Heat shock protein 60A (573 aa).

Residues 1–57 (MFRLPVSLARSSISRQLAMRGYAKDVRFGPEVRAMMLQGVDVLADAVAVTMGPKGRN) constitute a mitochondrion transit peptide.

This sequence belongs to the chaperonin (HSP60) family.

The protein resides in the mitochondrion matrix. In terms of biological role, prevents misfolding and promotes the refolding and proper assembly of unfolded polypeptides generated under stress conditions. The polypeptide is Heat shock protein 60A (Drosophila melanogaster (Fruit fly)).